Consider the following 229-residue polypeptide: Cytochrome c oxidase subunit 2 (229 aa).

At 1 to 26 (MATWAQFGLQDASSPLMEELTYFHDY) the chain is on the mitochondrial intermembrane side. Residues 27–48 (ALIVLTLITILVFYGLVSLLLS) traverse the membrane as a helical segment. The Mitochondrial matrix segment spans residues 49 to 62 (SSTNRFFLEGQELE). A helical membrane pass occupies residues 63 to 82 (TIWTVVPAFILIFIALPSLQ). Residues 83–229 (LLYLMDEVNN…ENWVAQYIEE (147 aa)) are Mitochondrial intermembrane-facing. Cu cation contacts are provided by His-161, Cys-196, Glu-198, Cys-200, His-204, and Met-207. Residue Glu-198 participates in Mg(2+) binding.

It belongs to the cytochrome c oxidase subunit 2 family. In terms of assembly, component of the cytochrome c oxidase (complex IV, CIV), a multisubunit enzyme composed of a catalytic core of 3 subunits and several supernumerary subunits. The complex exists as a monomer or a dimer and forms supercomplexes (SCs) in the inner mitochondrial membrane with ubiquinol-cytochrome c oxidoreductase (cytochrome b-c1 complex, complex III, CIII). The cofactor is Cu cation.

It localises to the mitochondrion inner membrane. The enzyme catalyses 4 Fe(II)-[cytochrome c] + O2 + 8 H(+)(in) = 4 Fe(III)-[cytochrome c] + 2 H2O + 4 H(+)(out). In terms of biological role, component of the cytochrome c oxidase, the last enzyme in the mitochondrial electron transport chain which drives oxidative phosphorylation. The respiratory chain contains 3 multisubunit complexes succinate dehydrogenase (complex II, CII), ubiquinol-cytochrome c oxidoreductase (cytochrome b-c1 complex, complex III, CIII) and cytochrome c oxidase (complex IV, CIV), that cooperate to transfer electrons derived from NADH and succinate to molecular oxygen, creating an electrochemical gradient over the inner membrane that drives transmembrane transport and the ATP synthase. Cytochrome c oxidase is the component of the respiratory chain that catalyzes the reduction of oxygen to water. Electrons originating from reduced cytochrome c in the intermembrane space (IMS) are transferred via the dinuclear copper A center (CU(A)) of subunit 2 and heme A of subunit 1 to the active site in subunit 1, a binuclear center (BNC) formed by heme A3 and copper B (CU(B)). The BNC reduces molecular oxygen to 2 water molecules using 4 electrons from cytochrome c in the IMS and 4 protons from the mitochondrial matrix. The sequence is that of Cytochrome c oxidase subunit 2 (COII) from Paracentrotus lividus (Common sea urchin).